The primary structure comprises 743 residues: DEAD-box ATP-dependent RNA helicase 3B, chloroplastic (743 aa).

Residues M1–A37 constitute a chloroplast transit peptide. A disordered region spans residues G60–E79. Residues S61–E79 are compositionally biased toward acidic residues. The Q motif signature appears at L88–R116. Residues L119 to I295 enclose the Helicase ATP-binding domain. A132 to T139 serves as a coordination point for ATP. The DEAD box motif lies at D243–D246. The Helicase C-terminal domain occupies V324–L469. The tract at residues L606 to S719 is disordered. Residues G642–D653 are compositionally biased toward gly residues. Positions E657–N671 are enriched in basic and acidic residues. Positions R688–S719 are enriched in low complexity. The CCHC-type zinc finger occupies G725–N742.

Belongs to the DEAD box helicase family. DDX21/DDX50 subfamily.

It is found in the plastid. The protein resides in the chloroplast stroma. The catalysed reaction is ATP + H2O = ADP + phosphate + H(+). Functionally, nuclear genome-encoded factor involved in ribosome biogenesis in chloroplasts. Binds specific group II introns in chloroplasts and facilitates their splicing. Is required for rRNA maturation in plastids and may contribute to the assembly of the large (50S) ribosomal subunit. Required for normal development of chloroplasts. In Zea mays (Maize), this protein is DEAD-box ATP-dependent RNA helicase 3B, chloroplastic.